A 218-amino-acid chain; its full sequence is Small ribosomal subunit protein uS3 (218 aa).

The 70-residue stretch at 40-109 folds into the KH type-2 domain; the sequence is IRKIINTEYS…DVSINIREVK (70 aa).

This sequence belongs to the universal ribosomal protein uS3 family. Part of the 30S ribosomal subunit. Forms a tight complex with proteins S10 and S14.

Binds the lower part of the 30S subunit head. Binds mRNA in the 70S ribosome, positioning it for translation. The chain is Small ribosomal subunit protein uS3 from Orientia tsutsugamushi (strain Boryong) (Rickettsia tsutsugamushi).